Consider the following 291-residue polypeptide: Taste receptor type 2 member 16 (291 aa).

Met1 is a topological domain (extracellular). The chain crosses the membrane as a helical span at residues 2–22 (IPIQLTVFFMIIYVLESLTII). Topologically, residues 23–41 (VQSSLIVAVLGREWLQVRR) are cytoplasmic. A helical membrane pass occupies residues 42–62 (LMPVDMILISLGISRFCLQWA). Over 63–84 (SMLNNFCSYFNLNYVLCNLTIT) the chain is Extracellular. N-linked (GlcNAc...) asparagine glycosylation is present at Asn80. A helical transmembrane segment spans residues 85–105 (WEFFNILTFWLNSLLTVFYCI). The Cytoplasmic segment spans residues 106–125 (KASSFTHHIFLWLRWRILRL). Residues 126–146 (FPWILLGSLMITCVTIIPSAI) form a helical membrane-spanning segment. At 147–182 (GNYIQIQLLTMEHLPRNSTVTDKLEKFHQYQFQAHT) the chain is on the extracellular side. An N-linked (GlcNAc...) asparagine glycan is attached at Asn163. Residues 183 to 203 (VALVIPFILFLASTILLMASL) traverse the membrane as a helical segment. At 204 to 228 (TKQIQHHSTGHCNPSMKAHFTALRS) the chain is on the cytoplasmic side. The chain crosses the membrane as a helical span at residues 229 to 249 (LAVLFIVFTSYFLTILITIIG). The Extracellular segment spans residues 250-257 (TLFDKRCW). A helical membrane pass occupies residues 258 to 278 (LWVWEAFVYAFILMHSTSLML). Residues 279-291 (SSPTLKRILKGKC) are Cytoplasmic-facing.

Belongs to the G-protein coupled receptor T2R family. In terms of assembly, interacts with RTP3 and RTP4.

Its subcellular location is the cell membrane. Its function is as follows. Receptor that may play a role in the perception of bitterness and is gustducin-linked. May play a role in sensing the chemical composition of the gastrointestinal content. The activity of this receptor may stimulate alpha gustducin, mediate PLC-beta-2 activation and lead to the gating of TRPM5. The sequence is that of Taste receptor type 2 member 16 (TAS2R16) from Pan paniscus (Pygmy chimpanzee).